Reading from the N-terminus, the 693-residue chain is Sodium-dependent phosphate transport protein 2B (693 aa).

Residues 1–46 (MAPWPELENSQPTSEKYTVKADGEQSAKPEKAKETEKDDTGTPITK) form a disordered region. Residues 1-89 (MAPWPELENS…KWSERDTKGK (89 aa)) are Cytoplasmic-facing. Residues 17–40 (YTVKADGEQSAKPEKAKETEKDDT) show a composition bias toward basic and acidic residues. The chain crosses the membrane as a helical span at residues 90 to 110 (ILCVFQGIGKFILLLVFLYFF). Residues 111-135 (VCSLDVLSSAFQLVGGKVAGKFFNN) lie on the Extracellular side of the membrane. Residues 136–156 (NSIMSNPLAGMVIGVLVTVLV) traverse the membrane as a helical segment. Residues 157–212 (QSSSTSTSIVVSMVASSLLPVHAAIPIIMGANIGTSITNTIVALMQAGDRKEFRRA) lie on the Cytoplasmic side of the membrane. Residues 213 to 233 (FAGATVHDFFNWLSVLVLLPL) form a helical membrane-spanning segment. Residues 234–361 (EAATGYLERL…IFVNFNLSDA (128 aa)) are Extracellular-facing. A disulfide bond links C302 and C349. 2 N-linked (GlcNAc...) asparagine glycosylation sites follow: N307 and N320. The chain crosses the membrane as a helical span at residues 362–382 (IVGTILLITSLLILCTCLILI). Residues 383–408 (VKLLGSVLRGQVAAVIKKTINTDFPY) are Cytoplasmic-facing. Residues 409-429 (PFSWVTGYLAILVGAGMTFIV) traverse the membrane as a helical segment. Topologically, residues 430–485 (QSSSVFTSAMTPLIGIGVISIQRAYPLTLGANIGTTTTAILAALASPGSTLKSSLQ) are extracellular. A helical membrane pass occupies residues 486–506 (IALCHFFFNISGIILWYPIPF). At 507–525 (TRLPIRLAKGLGNISSKYR) the chain is on the cytoplasmic side. The chain crosses the membrane as a helical span at residues 526–546 (WFAIVYLIVFFLLIPLAVFGL). Residues 547 to 550 (SLIG) lie on the Extracellular side of the membrane. The chain crosses the membrane as a helical span at residues 551 to 571 (WPVLVGVASPIVLVILLVVVL). Residues 572 to 693 (KILQSFCPGS…TKIVSSVTAL (122 aa)) are Cytoplasmic-facing.

This sequence belongs to the SLC34A transporter family. Post-translationally, glycosylated.

Its subcellular location is the apical cell membrane. It catalyses the reaction 3 Na(+)(out) + phosphate(out) = 3 Na(+)(in) + phosphate(in). Its function is as follows. Involved in actively transporting phosphate into cells via Na(+) cotransport. In Bos taurus (Bovine), this protein is Sodium-dependent phosphate transport protein 2B (SLC34A2).